A 338-amino-acid chain; its full sequence is Nuclear hormone receptor family member nhr-108 (338 aa).

The segment at residues 7 to 82 (NQPCMVCGEI…IGMLEKVVAS (76 aa)) is a DNA-binding region (nuclear receptor). The NR C4-type zinc-finger motif lies at 10–30 (CMVCGEISYSIRFGAVSCRAC). Residues 46–65 (KRCNGACDLGKYHRKTCQSC) form an NR C4-type; degenerate zinc finger. One can recognise an NR LBD domain in the interval 92–338 (NNQTILSGLE…QCPLYEATNE (247 aa)).

Belongs to the nuclear hormone receptor family.

The protein resides in the nucleus. In terms of biological role, orphan nuclear receptor. The protein is Nuclear hormone receptor family member nhr-108 (nhr-108) of Caenorhabditis elegans.